A 72-amino-acid polypeptide reads, in one-letter code: Cell division protein ZapB (72 aa).

Residues 1-72 adopt a coiled-coil conformation; it reads MSLEILDQLE…RSLLGKIDNV (72 aa). A disordered region spans residues 33-57; the sequence is KNNQSQQANDALRSENEQLKSEHQN. Residues 44-57 are compositionally biased toward basic and acidic residues; that stretch reads LRSENEQLKSEHQN.

This sequence belongs to the ZapB family. As to quaternary structure, homodimer. The ends of the coiled-coil dimer bind to each other, forming polymers. Interacts with FtsZ.

Its subcellular location is the cytoplasm. In terms of biological role, non-essential, abundant cell division factor that is required for proper Z-ring formation. It is recruited early to the divisome by direct interaction with FtsZ, stimulating Z-ring assembly and thereby promoting cell division earlier in the cell cycle. Its recruitment to the Z-ring requires functional FtsA or ZipA. This is Cell division protein ZapB from Pasteurella multocida (strain Pm70).